A 314-amino-acid chain; its full sequence is MPIQLECLSHTPLHGYVDPAPEVVAEVERVQAAARDRVRAFDPELVVVFAPDHFNGFFYDVMPPFCIGAAATAIGDFKSLAGKLPVPADLALSLAESVMAADIDVALSHRMQVDHGCADALAALTGSLHRYPVIPVFINSVAPPMATLRRARLLGDAVGRFLSRAGKRVLVVGSGGISHEPPVPELAGASEEVAERLIAGRNPSPESRAARQARTVAAAKSFVAGDSHLHPLNPEWDRAFLSLLASGELTAVDGMTNDAITRDGGKSAHEIRTWVAAFGALAAYGPYRASLDFYRAIPEWIAGFATMHAEPAAV.

The active-site Proton donor is His115. The Proton acceptor role is filled by His179.

It belongs to the LigB/MhpB extradiol dioxygenase family. In terms of assembly, homotetramer. Fe(2+) serves as cofactor.

The enzyme catalyses 3-(2,3-dihydroxyphenyl)propanoate + O2 = (2Z,4E)-2-hydroxy-6-oxonona-2,4-dienedioate + H(+). It catalyses the reaction (2E)-3-(2,3-dihydroxyphenyl)prop-2-enoate + O2 = (2Z,4E,7E)-2-hydroxy-6-oxonona-2,4,7-trienedioate + H(+). It participates in aromatic compound metabolism; 3-phenylpropanoate degradation. In terms of biological role, catalyzes the non-heme iron(II)-dependent oxidative cleavage of 2,3-dihydroxyphenylpropionic acid and 2,3-dihydroxicinnamic acid into 2-hydroxy-6-ketononadienedioate and 2-hydroxy-6-ketononatrienedioate, respectively. This Cupriavidus pinatubonensis (strain JMP 134 / LMG 1197) (Cupriavidus necator (strain JMP 134)) protein is 2,3-dihydroxyphenylpropionate/2,3-dihydroxicinnamic acid 1,2-dioxygenase.